A 507-amino-acid polypeptide reads, in one-letter code: ATP synthase subunit alpha, chloroplastic (507 aa).

Position 170–177 (170–177 (GDRQTGKT)) interacts with ATP.

Belongs to the ATPase alpha/beta chains family. In terms of assembly, F-type ATPases have 2 components, CF(1) - the catalytic core - and CF(0) - the membrane proton channel. CF(1) has five subunits: alpha(3), beta(3), gamma(1), delta(1), epsilon(1). CF(0) has four main subunits: a, b, b' and c.

It is found in the plastid. The protein resides in the chloroplast thylakoid membrane. The enzyme catalyses ATP + H2O + 4 H(+)(in) = ADP + phosphate + 5 H(+)(out). In terms of biological role, produces ATP from ADP in the presence of a proton gradient across the membrane. The alpha chain is a regulatory subunit. The protein is ATP synthase subunit alpha, chloroplastic of Atropa belladonna (Belladonna).